The following is an 892-amino-acid chain: Translation initiation factor IF-2 (892 aa).

Positions 51-296 (REHGSAPNKL…KGKRKPSTLQ (246 aa)) are disordered. Residues 68–82 (STLNIPSTGGKSKSV) show a composition bias toward polar residues. The segment covering 99–217 (EQAKAEEQAQ…KMAAENEGKW (119 aa)) has biased composition (basic and acidic residues). Residues 224–237 (QTESADYHVTTSQH) show a composition bias toward polar residues. Basic and acidic residues predominate over residues 239–254 (RAAEDENDAKVEGDRR). Residues 255-269 (SRTRGGKATKQKKGN) show a composition bias toward basic residues. Basic and acidic residues predominate over residues 270-283 (KLSESKADREEARA). The 170-residue stretch at 391–560 (HRAPVVTIMG…LLQAEVMELK (170 aa)) folds into the tr-type G domain. A G1 region spans residues 400-407 (GHVDHGKT). Residue 400 to 407 (GHVDHGKT) coordinates GTP. The segment at 425–429 (GITQH) is G2. Positions 446-449 (DTPG) are G3. Residues 446–450 (DTPGH) and 500–503 (NKID) contribute to the GTP site. Residues 500–503 (NKID) form a G4 region. Residues 536 to 538 (SAK) form a G5 region.

The protein belongs to the TRAFAC class translation factor GTPase superfamily. Classic translation factor GTPase family. IF-2 subfamily.

It is found in the cytoplasm. Its function is as follows. One of the essential components for the initiation of protein synthesis. Protects formylmethionyl-tRNA from spontaneous hydrolysis and promotes its binding to the 30S ribosomal subunits. Also involved in the hydrolysis of GTP during the formation of the 70S ribosomal complex. In Yersinia enterocolitica serotype O:8 / biotype 1B (strain NCTC 13174 / 8081), this protein is Translation initiation factor IF-2.